The following is an 82-amino-acid chain: Small ribosomal subunit protein bS16 (82 aa).

It belongs to the bacterial ribosomal protein bS16 family.

This chain is Small ribosomal subunit protein bS16, found in Synechocystis sp. (strain ATCC 27184 / PCC 6803 / Kazusa).